The primary structure comprises 252 residues: F-box/SPRY domain-containing protein 1 (252 aa).

One can recognise an F-box domain in the interval 1-48 (MVDPLCNYNVLESIFSYLELNDLNRCSQVCKSWYHFLNDENSDVWRWH). The 193-residue stretch at 58 to 250 (VKSDLLSSVT…VSMVYLGTPL (193 aa)) folds into the B30.2/SPRY domain.

The protein belongs to the FBXO45/Fsn family. Component of an E3 ubiquitin ligase complex composed of hiw and Fsn.

Its subcellular location is the synapse. Its pathway is protein modification; protein ubiquitination. Required in the presynaptic motoneuron to down-regulate the levels of wnd and restrain synaptic terminal growth at the neuromuscular junction (NMJ). The polypeptide is F-box/SPRY domain-containing protein 1 (Drosophila grimshawi (Hawaiian fruit fly)).